Consider the following 1868-residue polypeptide: Inactive histone-lysine N-methyltransferase 2E (1868 aa).

The HCFC1-binding motif (HBM) motif lies at 63–66; the sequence is DHNY. The PHD-type zinc-finger motif lies at 118-166; it reads VTRCICGFTHDDGYMICCDKCSVWQHIDCMGIDRQHIPDTYLCERCQPR. 8 residues coordinate Zn(2+): Cys-121, Cys-123, Cys-135, Cys-138, His-143, Cys-146, Cys-160, and Cys-163. Disordered regions lie at residues 178–197, 217–268, and 308–329; these read RRKR…SGDE, ASRV…SSDS, and GSGN…SLFR. The region spanning 330–447 is the SET domain; sequence PPVESHIQKN…KGTEITIAFD (118 aa). Ser-435 is a glycosylation site (O-linked (GlcNAc) serine). Residue Thr-440 is glycosylated (O-linked (GlcNAc) threonine). The disordered stretch occupies residues 472–504; sequence KRSSESTENINSGYETRRKKGKKEKDTSKEKDI. Over residues 494–504 the composition is skewed to basic and acidic residues; the sequence is KEKDTSKEKDI. Positions 559 to 613 form a coiled coil; the sequence is VEMESEEQIAERKRKMTREERKMEAILQAFARLEKREKRREQALERISTAKTEVK. The segment covering 646–670 has biased composition (basic residues); the sequence is NRTKQRKSFSRSRTHIGQQRRRHRT. The tract at residues 646-682 is disordered; that stretch reads NRTKQRKSFSRSRTHIGQQRRRHRTVSMCSDIPPSSP. Phosphoserine is present on residues Ser-837 and Ser-845. Residues 884–908 show a composition bias toward low complexity; the sequence is YSESSTPTPSPYATPTHTDITPTDP. Disordered regions lie at residues 884-924 and 1038-1068; these read YSES…ETYR and SMET…SSWV. Residues 1049 to 1068 show a composition bias toward polar residues; sequence PSNQLDSTHSGRGTMYSSWV. Residue Ser-1070 is modified to Phosphoserine. Disordered stretches follow at residues 1165 to 1222, 1236 to 1315, 1334 to 1565, and 1585 to 1842; these read KRQR…PPPA, SSEE…SNHI, PDAE…QNQQ, and VFTS…QASP. Over residues 1184-1197 the composition is skewed to low complexity; it reads SVSPHPSGSLSSSG. A compositionally biased stretch (polar residues) spans 1203-1213; the sequence is SSENGEQAENQ. Ser-1282 carries the phosphoserine modification. Residues 1282-1291 are compositionally biased toward basic and acidic residues; that stretch reads SDHRKDKDSG. Low complexity-rich tracts occupy residues 1294 to 1312 and 1348 to 1363; these read SPCV…SSHS and PSPD…SKPG. The residue at position 1364 (Ser-1364) is a Phosphoserine. Composition is skewed to polar residues over residues 1389-1421, 1451-1463, and 1488-1498; these read ATVS…QNHA, HTEN…TPHT, and SQSPQVGTPQR. Residues 1506 to 1518 are compositionally biased toward low complexity; sequence AAAQNLQANPQQA. Residues 1519-1547 are compositionally biased toward polar residues; sequence TSGALFTQTPSGQSSATYSQFNQQSLNST. Positions 1548–1558 are enriched in pro residues; that stretch reads APPPPPPPPPS. The segment covering 1585-1603 has biased composition (polar residues); sequence VFTSGPNQALPGSTSQQSV. A compositionally biased stretch (pro residues) spans 1631–1642; the sequence is VPPPPPPPPAPG. A compositionally biased stretch (polar residues) spans 1647–1656; that stretch reads QQPSSHQQHS. Residues 1682-1692 are compositionally biased toward pro residues; it reads LPPPPPPPGPA. Polar residues predominate over residues 1706–1716; it reads QSLQAQHQHVV. The segment covering 1719-1732 has biased composition (pro residues); the sequence is APPPPPPPPPPPPA. The segment covering 1806-1816 has biased composition (polar residues); sequence QGPNSIPTPTA.

The protein belongs to the class V-like SAM-binding methyltransferase superfamily. Histone-lysine methyltransferase family. TRX/MLL subfamily. Component of a complex composed of KMT2E, OGT and USP7; the complex stabilizes KMT2E, preventing KMT2E ubiquitination and proteasomal-mediated degradation. Interacts (via N-terminus) with OGT (via TRP repeats). Interacts with deubiquitinating enzyme USP7 (via MATH domain). Interacts (via HBM motif) with HCFC1 (via Kelch domain). Interacts with E2F1; the interaction is probably indirect and is mediated via HCFC1. Post-translationally, ubiquitinated. Deubiquitinated by USP7. In terms of processing, O-glycosylated at Ser-435 and Thr-440 in the SET domain by OGT which probably prevents KMT2E proteasomal-mediated degradation.

It localises to the chromosome. It is found in the cytoplasm. Its subcellular location is the cytoskeleton. The protein resides in the microtubule organizing center. The protein localises to the centrosome. It localises to the nucleus speckle. In terms of biological role, associates with chromatin regions downstream of transcriptional start sites of active genes and thus regulates gene transcription. Chromatin interaction is mediated via the binding to tri-methylated histone H3 at 'Lys-4' (H3K4me3). Key regulator of hematopoiesis involved in terminal myeloid differentiation and in the regulation of hematopoietic stem cell (HSCs) self-renewal by a mechanism that involves DNA methylation. Also acts as an important cell cycle regulator, participating in cell cycle regulatory network machinery at multiple cell cycle stages including G1/S transition, S phase progression and mitotic entry. Recruited to E2F1 responsive promoters by HCFC1 where it stimulates tri-methylation of histone H3 at 'Lys-4' and transcriptional activation and thereby facilitates G1 to S phase transition. During myoblast differentiation, required to suppress inappropriate expression of S-phase-promoting genes and maintain expression of determination genes in quiescent cells. This chain is Inactive histone-lysine N-methyltransferase 2E (Kmt2e), found in Mus musculus (Mouse).